The following is a 544-amino-acid chain: Chaperonin GroEL 2 (544 aa).

ATP contacts are provided by residues 29–32 (TLGP), Lys50, 86–90 (DGTTT), Gly414, and Asp494.

It belongs to the chaperonin (HSP60) family. In terms of assembly, forms a cylinder of 14 subunits composed of two heptameric rings stacked back-to-back. Interacts with the co-chaperonin GroES.

The protein resides in the cytoplasm. The enzyme catalyses ATP + H2O + a folded polypeptide = ADP + phosphate + an unfolded polypeptide.. In terms of biological role, together with its co-chaperonin GroES, plays an essential role in assisting protein folding. The GroEL-GroES system forms a nano-cage that allows encapsulation of the non-native substrate proteins and provides a physical environment optimized to promote and accelerate protein folding. The sequence is that of Chaperonin GroEL 2 from Psychromonas ingrahamii (strain DSM 17664 / CCUG 51855 / 37).